The primary structure comprises 503 residues: Maturase K (503 aa).

It belongs to the intron maturase 2 family. MatK subfamily.

Its subcellular location is the plastid. The protein resides in the chloroplast. In terms of biological role, usually encoded in the trnK tRNA gene intron. Probably assists in splicing its own and other chloroplast group II introns. This chain is Maturase K, found in Liquidambar styraciflua (Sweetgum tree).